The chain runs to 319 residues: Plastid lipid-associated protein 2, chloroplastic (319 aa).

Residues 1–59 (MATVQFFNQFPCKTRVQSSANSKPLSKPPSSLVPMSALTRRPSFPPGEFAVSRSDFRVR) constitute a chloroplast transit peptide. Residues 17–39 (QSSANSKPLSKPPSSLVPMSALT) are disordered. Residues 18–36 (SSANSKPLSKPPSSLVPMS) are compositionally biased toward low complexity.

This sequence belongs to the PAP/fibrillin family. Expressed almost exclusively in petals. Very weak expression in all other organs.

The protein localises to the plastid. The protein resides in the chloroplast. Its function is as follows. May stabilize the accumulated carotenoid structures. This is Plastid lipid-associated protein 2, chloroplastic (PAP2) from Brassica campestris (Field mustard).